Here is a 414-residue protein sequence, read N- to C-terminus: TAR DNA-binding protein 43 (414 aa).

Residues Lys79, Lys84, Lys95, Lys102, and Lys181 each participate in a glycyl lysine isopeptide (Lys-Gly) (interchain with G-Cter in SUMO2) cross-link. The Nuclear localization signal signature appears at 82–98 (KRKMDETDASSAVKVKR). RRM domains lie at 104 to 200 (SDLI…RCTE) and 191 to 262 (RKVF…NAEP). Residue Ser183 is modified to Phosphoserine. The interaction with UBQLN2 stretch occupies residues 216–414 (DVMDVFIPKP…MDSKSSGWGM (199 aa)). A Nuclear export signal motif is present at residues 239 to 250 (IAQSLCGEDLII). The segment covering 261–274 (EPKHNSNRQLERSG) has biased composition (basic and acidic residues). Disordered regions lie at residues 261–303 (EPKH…GNNQ) and 341–373 (ASQQ…GNNS). Lys263 participates in a covalent cross-link: Glycyl lysine isopeptide (Lys-Gly) (interchain with G-Cter in SUMO2). The segment covering 275-303 (RFGGNPGGFGNQGGFGNSRGGGAGLGNNQ) has biased composition (gly residues). Ser292 carries the phosphoserine modification. An Omega-N-methylarginine modification is found at Arg293. A compositionally biased stretch (low complexity) spans 342 to 358 (SQQNQSGPSGNNQNQGN).

As to quaternary structure, homodimer. Homooligomer (via its N-terminal domain). Interacts with BRDT. Binds specifically to pyrimidine-rich motifs of TAR DNA and to single stranded TG repeated sequences. Binds to RNA, specifically to UG repeated sequences with a minimum of six contiguous repeats. Interacts with ATXN2; the interaction is RNA-dependent. Interacts with MATR3. Interacts with UBQLN2. Interacts with HNRNPA2B1. Interacts with ZNF106. Interacts with CNOT7/CAF1. Interacts with CRY2. Interacts with PPIA/CYPA; the interaction is dependent on RNA-binding activity of TARDBP and PPIase activity of PPIA/CYPA and acetylation of PPIA/CYPA at 'Lys-125' favors the interaction. In terms of processing, hyperphosphorylated in hippocampus, neocortex, and spinal cord from individuals affected with ALS and FTLDU. Phosphorylated upon cellular stress. Post-translationally, ubiquitinated in hippocampus, neocortex, and spinal cord from individuals affected with ALS and FTLDU. Cleaved to generate C-terminal fragments in hippocampus, neocortex, and spinal cord from individuals affected with ALS and FTLDU. In terms of tissue distribution, ubiquitously expressed. In particular, expression is high in pancreas, placenta, lung, genital tract and spleen.

It is found in the nucleus. Its subcellular location is the cytoplasm. It localises to the stress granule. The protein localises to the mitochondrion. Functionally, RNA-binding protein that is involved in various steps of RNA biogenesis and processing. Preferentially binds, via its two RNA recognition motifs RRM1 and RRM2, to GU-repeats on RNA molecules predominantly localized within long introns and in the 3'UTR of mRNAs. In turn, regulates the splicing of many non-coding and protein-coding RNAs including proteins involved in neuronal survival, as well as mRNAs that encode proteins relevant for neurodegenerative diseases. Plays a role in maintaining mitochondrial homeostasis by regulating the processing of mitochondrial transcripts. Also regulates mRNA stability by recruiting CNOT7/CAF1 deadenylase on mRNA 3'UTR leading to poly(A) tail deadenylation and thus shortening. In response to oxidative insult, associates with stalled ribosomes localized to stress granules (SGs) and contributes to cell survival. Also participates in the normal skeletal muscle formation and regeneration, forming cytoplasmic myo-granules and binding mRNAs that encode sarcomeric proteins. Plays a role in the maintenance of the circadian clock periodicity via stabilization of the CRY1 and CRY2 proteins in a FBXL3-dependent manner. Negatively regulates the expression of CDK6. Regulates the expression of HDAC6, ATG7 and VCP in a PPIA/CYPA-dependent manner. This chain is TAR DNA-binding protein 43, found in Homo sapiens (Human).